A 231-amino-acid chain; its full sequence is Uracil phosphoribosyltransferase (231 aa).

38-42 (KGLVR) contributes to the GTP binding site. 5-phospho-alpha-D-ribose 1-diphosphate is bound by residues R87, R112, and 140 to 148 (DPMIATGST). Uracil contacts are provided by residues I203 and 208–210 (GDA). D209 serves as a coordination point for 5-phospho-alpha-D-ribose 1-diphosphate.

It belongs to the UPRTase family. Mg(2+) serves as cofactor.

The enzyme catalyses UMP + diphosphate = 5-phospho-alpha-D-ribose 1-diphosphate + uracil. The protein operates within pyrimidine metabolism; UMP biosynthesis via salvage pathway; UMP from uracil: step 1/1. Allosterically activated by GTP. Its function is as follows. Catalyzes the conversion of uracil and 5-phospho-alpha-D-ribose 1-diphosphate (PRPP) to UMP and diphosphate. The protein is Uracil phosphoribosyltransferase of Methanococcus maripaludis (strain C6 / ATCC BAA-1332).